A 561-amino-acid chain; its full sequence is DNA ligase B (561 aa).

K125 serves as the catalytic N6-AMP-lysine intermediate.

Belongs to the NAD-dependent DNA ligase family. LigB subfamily.

The catalysed reaction is NAD(+) + (deoxyribonucleotide)n-3'-hydroxyl + 5'-phospho-(deoxyribonucleotide)m = (deoxyribonucleotide)n+m + AMP + beta-nicotinamide D-nucleotide.. Functionally, catalyzes the formation of phosphodiester linkages between 5'-phosphoryl and 3'-hydroxyl groups in double-stranded DNA using NAD as a coenzyme and as the energy source for the reaction. This Salmonella newport (strain SL254) protein is DNA ligase B.